Consider the following 376-residue polypeptide: Fibromodulin (376 aa).

An N-terminal signal peptide occupies residues 1–18 (MQWASVLLLAGLCSLSQG). Glutamine 19 carries the post-translational modification Pyrrolidone carboxylic acid. 6 positions are modified to sulfotyrosine: tyrosine 20, tyrosine 38, tyrosine 53, tyrosine 55, tyrosine 63, and tyrosine 65. The LRRNT domain occupies 67–105 (APPPPEPRDCPQECDCPPNFPTAMYCDNRNLKYLPFVPS). LRR repeat units lie at residues 106–127 (RMKY…VFDN), 130–151 (GLLW…RKVF), 156–176 (HLER…PLPR), 177–198 (SLRE…ALEG), 201–222 (NLTA…MRGL), 224–245 (SLIL…LPSA), 246–266 (LEQL…YFRG), and 269–289 (KLLY…ATNT). Residue asparagine 127 is glycosylated (N-linked (GlcNAc...) (keratan sulfate) asparagine). The N-linked (GlcNAc...) (keratan sulfate) asparagine glycan is linked to asparagine 166. An N-linked (GlcNAc...) (keratan sulfate) asparagine glycan is attached at asparagine 201. Residue asparagine 291 is glycosylated (N-linked (GlcNAc...) (keratan sulfate) asparagine). 2 LRR repeats span residues 294-315 (SLLE…NTNL) and 316-335 (ENLY…SFCT). A disulfide bridge connects residues cysteine 334 and cysteine 367. An N-linked (GlcNAc...) asparagine glycan is attached at asparagine 341. One copy of the LRR 11 repeat lies at 344 to 367 (KLQVLRLDGNEIKRSAMPVDAPLC).

This sequence belongs to the small leucine-rich proteoglycan (SLRP) family. SLRP class II subfamily. In terms of assembly, binds to type I and type II collagen. Binds keratan sulfate chains. Post-translationally, sulfated on tyrosine residue(s). In terms of tissue distribution, highest levels observed in knee epiphysis, in calvarial and diaphyseal bone, in nasal and costal cartilage, in the eye, and in bladder. In mature knee joint it is mostly present in the proliferating zone of growth plate. It is also observed in ligaments, especially at insertion sites, in the junction between meniscus and joint capsule, in the perimysium of skeletal muscle and in the periosteum.

Its subcellular location is the secreted. The protein localises to the extracellular space. It is found in the extracellular matrix. Functionally, affects the rate of fibrils formation. May have a primary role in collagen fibrillogenesis. The protein is Fibromodulin (Fmod) of Mus musculus (Mouse).